We begin with the raw amino-acid sequence, 1059 residues long: Protein cappuccino (1059 aa).

2 stretches are compositionally biased toward polar residues: residues 62-80 and 90-123; these read AAVTQTPPGVTSSTPNESG and ATTSSPSLETQSTVIISFKSSQTPVQSQTNSAAS. 2 disordered regions span residues 62–146 and 448–647; these read AAVT…GTPT and QTES…TAPP. The span at 133 to 142 shows a compositional bias: pro residues; it reads LPLPPPPPGF. Residues 468-481 show a composition bias toward basic and acidic residues; the sequence is SDNESAKEDGEKPH. Residues 480–560 enclose the FH1 domain; that stretch reads PHAVAPPPPP…PPPPMSASPS (81 aa). Residues 483–541 are compositionally biased toward pro residues; sequence VAPPPPPPPPPLHAFVAPPPPPPPPPPPPPPLANYGAPPPPPPPPPGSGSAPPPPPPAP. An FH2 domain is found at 585–1032; sequence RKSAVNPPKP…KKSKQAQIES (448 aa). The span at 620–629 shows a compositional bias: polar residues; that stretch reads TDSTENSGSS. The interval 1049 to 1059 is important for interaction with spir; the sequence is KERMLMRRSKN.

Belongs to the formin homology family. Cappuccino subfamily. In terms of assembly, interacts with wash. Interacts with spir.

The protein resides in the cytoplasm. It is found in the cytoskeleton. The protein localises to the cytosol. It localises to the membrane. Its subcellular location is the cytoplasmic vesicle membrane. Its function is as follows. Acts as an actin nucleation factor and promotes assembly of actin filaments together with spir. May play a role in intracellular vesicle transport along actin fibers, providing a novel link between actin cytoskeleton dynamics and intracellular transport. The protein is Protein cappuccino (capu) of Drosophila melanogaster (Fruit fly).